The following is a 487-amino-acid chain: Phenylalanine--tRNA ligase alpha subunit (487 aa).

L-phenylalanine contacts are provided by residues Thr319, 361 to 363 (QVE), and Tyr401. Glu403 serves as a coordination point for Mg(2+). Phe427 is an L-phenylalanine binding site.

It belongs to the class-II aminoacyl-tRNA synthetase family. Phe-tRNA synthetase alpha subunit type 2 subfamily. As to quaternary structure, tetramer of two alpha and two beta subunits. The cofactor is Mg(2+).

It is found in the cytoplasm. It catalyses the reaction tRNA(Phe) + L-phenylalanine + ATP = L-phenylalanyl-tRNA(Phe) + AMP + diphosphate + H(+). This Dictyostelium discoideum (Social amoeba) protein is Phenylalanine--tRNA ligase alpha subunit (phesA).